The chain runs to 572 residues: MNLHQTVEHEAAAAFAAAGIADSPIVLQPTKNAEHGDFQINGVMGAAKKAKQNPRELAQKVAEALADNAVIESAEVAGPGFINLRLRPEFLAQNIQTALNDARFGVAKTDKPQTVVIDYSSPNLAKEMHVGHLRSSIIGDSISRVLAFMGNTVIRQNHVGDWGTQFGMLVAYLVEQQKDNAAFELADLEQFYRAAKVRFDEDPAFADTAREYVVKLQGGDETVLALWKQFVDISLSHAQAVYDTLGLKLRPEDVAGESKYNDDLQPVVDDLVQKGLAVEDDGAKVVFLDEFKNKEGEPAAFIVQKQGGGFLYASTDLACLRYRIGRLKADRLLYVVDHRQALHFEQLFTTSRKAGYLPENVGAAFIGFGTMMGKDGKPFKTRSGDTVKLVDLLTEAVERATALVKEKNPELGADEAAKIGKTVGIGAVKYADLSKNRTSDYVFDWDAMLSFEGNTAPYLQYAYTRVQSVFRKAGEWDANAPTVLTEPLEKQLAAELLKFEDVLQSVADTAYPHYLAAYLYQIATLFSRFYEACPILKAEGASRNSRLQLAKLTGDTLKQGLDLLGIDVLDVM.

The short motif at 122 to 132 (PNLAKEMHVGH) is the 'HIGH' region element.

It belongs to the class-I aminoacyl-tRNA synthetase family. In terms of assembly, monomer.

It is found in the cytoplasm. It catalyses the reaction tRNA(Arg) + L-arginine + ATP = L-arginyl-tRNA(Arg) + AMP + diphosphate. In Neisseria meningitidis serogroup B (strain ATCC BAA-335 / MC58), this protein is Arginine--tRNA ligase.